The chain runs to 316 residues: Methionyl-tRNA formyltransferase (316 aa).

109–112 (SLLP) is a binding site for (6S)-5,6,7,8-tetrahydrofolate.

This sequence belongs to the Fmt family.

It catalyses the reaction L-methionyl-tRNA(fMet) + (6R)-10-formyltetrahydrofolate = N-formyl-L-methionyl-tRNA(fMet) + (6S)-5,6,7,8-tetrahydrofolate + H(+). Its function is as follows. Attaches a formyl group to the free amino group of methionyl-tRNA(fMet). The formyl group appears to play a dual role in the initiator identity of N-formylmethionyl-tRNA by promoting its recognition by IF2 and preventing the misappropriation of this tRNA by the elongation apparatus. This chain is Methionyl-tRNA formyltransferase, found in Nitrosomonas eutropha (strain DSM 101675 / C91 / Nm57).